Here is a 356-residue protein sequence, read N- to C-terminus: Guanine nucleotide-binding protein alpha-2 subunit (356 aa).

Glycine 2 carries N-myristoyl glycine lipidation. Cysteine 4 carries S-palmitoyl cysteine lipidation. The G-alpha domain occupies 35–356 (REVKLLLLGA…LTNNLRDIVL (322 aa)). Residues 38–51 (KLLLLGAGESGKST) form a G1 motif region. GTP contacts are provided by glutamate 46, serine 47, glycine 48, lysine 49, serine 50, threonine 51, aspartate 153, leucine 178, threonine 184, glycine 206, asparagine 272, lysine 273, aspartate 275, and alanine 329. Serine 50 contributes to the Mg(2+) binding site. The tract at residues 176 to 184 (DILRCRNKT) is G2 motif. Threonine 184 contacts Mg(2+). The G3 motif stretch occupies residues 199-208 (YRIFDVGGQR). The segment at 268-275 (ILFLNKVD) is G4 motif. The tract at residues 327-332 (TNATDV) is G5 motif.

The protein belongs to the G-alpha family. In terms of assembly, g proteins are composed of 3 units; alpha, beta and gamma. The alpha chain contains the guanine nucleotide binding site. Requires Mg(2+) as cofactor.

In terms of biological role, guanine nucleotide-binding proteins (G proteins) are involved as modulators or transducers in various transmembrane signaling systems. In Mycosarcoma maydis (Corn smut fungus), this protein is Guanine nucleotide-binding protein alpha-2 subunit (GPA2).